Here is a 218-residue protein sequence, read N- to C-terminus: Small ribosomal subunit protein uS3c (218 aa).

One can recognise a KH type-2 domain in the interval 47–118 (VQKNIRISSG…KLNIAITRIS (72 aa)).

The protein belongs to the universal ribosomal protein uS3 family. In terms of assembly, part of the 30S ribosomal subunit.

The protein localises to the plastid. The protein resides in the chloroplast. The sequence is that of Small ribosomal subunit protein uS3c (rps3) from Crucihimalaya wallichii (Rock-cress).